Here is a 116-residue protein sequence, read N- to C-terminus: MQITVMKGKIHRATVTDADLNYEGSLTVDMDLVDAAGMRVYEKVSVVNVNNGARFETYIIEGKRGSGEICLNGAAARLGMKGDKIIIITYAQVEEKELASDYTPKVVHVDEKNRKR.

Residue serine 25 is the Schiff-base intermediate with substrate; via pyruvic acid of the active site. Serine 25 is modified (pyruvic acid (Ser)). Threonine 57 contributes to the substrate binding site. The active-site Proton donor is tyrosine 58. 73-75 contacts substrate; sequence GAA.

The protein belongs to the PanD family. Heterooctamer of four alpha and four beta subunits. The cofactor is pyruvate. Post-translationally, is synthesized initially as an inactive proenzyme, which is activated by self-cleavage at a specific serine bond to produce a beta-subunit with a hydroxyl group at its C-terminus and an alpha-subunit with a pyruvoyl group at its N-terminus.

The protein resides in the cytoplasm. The enzyme catalyses L-aspartate + H(+) = beta-alanine + CO2. It participates in cofactor biosynthesis; (R)-pantothenate biosynthesis; beta-alanine from L-aspartate: step 1/1. Functionally, catalyzes the pyruvoyl-dependent decarboxylation of aspartate to produce beta-alanine. This chain is Aspartate 1-decarboxylase, found in Leptospira interrogans serogroup Icterohaemorrhagiae serovar copenhageni (strain Fiocruz L1-130).